We begin with the raw amino-acid sequence, 379 residues long: Homoserine O-succinyltransferase (379 aa).

The AB hydrolase-1 domain occupies 51–360 (NAVLICHALS…DAPQGHDAFL (310 aa)). Ser157 (nucleophile) is an active-site residue. Residue Arg227 participates in substrate binding. Residues Asp323 and His356 contribute to the active site. Asp357 contacts substrate.

This sequence belongs to the AB hydrolase superfamily. MetX family. In terms of assembly, homodimer.

The protein resides in the cytoplasm. The enzyme catalyses L-homoserine + succinyl-CoA = O-succinyl-L-homoserine + CoA. It functions in the pathway amino-acid biosynthesis; L-methionine biosynthesis via de novo pathway; O-succinyl-L-homoserine from L-homoserine: step 1/1. Functionally, transfers a succinyl group from succinyl-CoA to L-homoserine, forming succinyl-L-homoserine. This is Homoserine O-succinyltransferase from Pseudomonas savastanoi pv. phaseolicola (strain 1448A / Race 6) (Pseudomonas syringae pv. phaseolicola (strain 1448A / Race 6)).